The chain runs to 204 residues: Redox-sensing transcriptional repressor Rex 2 (204 aa).

Positions 17-53 form a DNA-binding region, H-T-H motif; that stretch reads MYRKVLEATKKPYISSDEIARFLEINPDLVRKDFSYL.

It belongs to the transcriptional regulatory Rex family. In terms of assembly, homodimer.

Its subcellular location is the cytoplasm. Modulates transcription in response to changes in cellular NADH/NAD(+) redox state. The sequence is that of Redox-sensing transcriptional repressor Rex 2 (rex2) from Thermotoga maritima (strain ATCC 43589 / DSM 3109 / JCM 10099 / NBRC 100826 / MSB8).